The primary structure comprises 92 residues: Protein S100-A12 (92 aa).

EF-hand domains are found at residues 13–48 and 49–84; these read NIFH…LQNT and KDQP…VLKT. Residue H16 participates in Cu cation binding. Zn(2+) is bound at residue H16. Residues S19 and H24 each contribute to the Ca(2+) site. D26 is a Cu cation binding site. D26 contributes to the Zn(2+) binding site. T27 and E32 together coordinate Ca(2+). Positions 38 to 53 are hinge domain; the sequence is TKELPKTLQNTKDQPT. 4 residues coordinate Ca(2+): D62, D64, D66, and E73. Positions 86 and 90 each coordinate Cu cation. Residues H86 and H90 each coordinate Zn(2+).

This sequence belongs to the S-100 family. As to quaternary structure, homodimer. Homooligomer (tetramer or hexamer) in the presence of calcium, zinc and copper ions. Interacts with AGER and both calcium and zinc are essential for the interaction. Interacts with CACYBP in a calcium-dependent manner. Up-regulated in stimulated inflammatory effector cells.

The protein resides in the secreted. It localises to the cytoplasm. Its subcellular location is the cytoskeleton. The protein localises to the cell membrane. Its function is as follows. S100A12 is a calcium-, zinc- and copper-binding protein which plays a prominent role in the regulation of inflammatory processes and immune response. Its pro-inflammatory activity involves recruitment of leukocytes, promotion of cytokine and chemokine production, and regulation of leukocyte adhesion and migration. Acts as an alarmin or a danger associated molecular pattern (DAMP) molecule and stimulates innate immune cells via binding to receptor for advanced glycation endproducts (AGER). Binding to AGER activates the MAP-kinase and NF-kappa-B signaling pathways leading to production of pro-inflammatory cytokines and up-regulation of cell adhesion molecules ICAM1 and VCAM1. Acts as a monocyte and mast cell chemoattractant. Can stimulate mast cell degranulation and activation which generates chemokines, histamine and cytokines inducing further leukocyte recruitment to the sites of inflammation. Can inhibit the activity of matrix metalloproteinases; MMP2, MMP3 and MMP9 by chelating Zn(2+) from their active sites. This is Protein S100-A12 (S100A12) from Bos taurus (Bovine).